Consider the following 308-residue polypeptide: MMDLGLSLGLGLASQGSLTSSTTTTSSPGAGSSSPWAAALNSIVGDVRRDQAAAHAAAAVGVGVGGEEMYQGRASTSPDSAAALSSASGKRERELERSGSGVDDDDGADGAGGRKKLRLSKDQAAVLEECFKTHSTLNPKQKVALANRLGLRPRQVEVWFQNRRARTKLKQTEVDCEYLKRWCERLADENKRLEKELADLRALKAAPSPASASAMQPSSSAAATLTMCPSCRRVATAGAPHQPNHQQCHPKSNTTISSSSTAAAAVAVAGGNVLPSHCQFFPAAAAAADRTSQSTWNAAAPLVTRELF.

Disordered stretches follow at residues 15 to 36 (QGSLTSSTTTTSSPGAGSSSPW) and 71 to 117 (QGRA…RKKL). A compositionally biased stretch (low complexity) spans 74–88 (ASTSPDSAAALSSAS). A DNA-binding region (homeobox) is located at residues 112–171 (GGRKKLRLSKDQAAVLEECFKTHSTLNPKQKVALANRLGLRPRQVEVWFQNRRARTKLKQ). The tract at residues 170–214 (KQTEVDCEYLKRWCERLADENKRLEKELADLRALKAAPSPASASA) is leucine-zipper.

The protein belongs to the HD-ZIP homeobox family. Class II subfamily. Homodimer. May form a heterodimer with HOX1, HOX3 or HOX7. Expressed in seedlings, roots, leaves, nodes, internodes, flowers and embryo.

The protein localises to the nucleus. Probable transcription factor that binds to the DNA sequence 5'-CAAT[GC]ATTG-3'. The chain is Homeobox-leucine zipper protein HOX2 (HOX2) from Oryza sativa subsp. indica (Rice).